A 222-amino-acid polypeptide reads, in one-letter code: 2-C-methyl-D-erythritol 4-phosphate cytidylyltransferase (222 aa).

The protein belongs to the IspD/TarI cytidylyltransferase family. IspD subfamily.

The enzyme catalyses 2-C-methyl-D-erythritol 4-phosphate + CTP + H(+) = 4-CDP-2-C-methyl-D-erythritol + diphosphate. Its pathway is isoprenoid biosynthesis; isopentenyl diphosphate biosynthesis via DXP pathway; isopentenyl diphosphate from 1-deoxy-D-xylulose 5-phosphate: step 2/6. Catalyzes the formation of 4-diphosphocytidyl-2-C-methyl-D-erythritol from CTP and 2-C-methyl-D-erythritol 4-phosphate (MEP). In Thermotoga petrophila (strain ATCC BAA-488 / DSM 13995 / JCM 10881 / RKU-1), this protein is 2-C-methyl-D-erythritol 4-phosphate cytidylyltransferase.